The following is a 307-amino-acid chain: UDP-3-O-acyl-N-acetylglucosamine deacetylase (307 aa).

The Zn(2+) site is built by His78, His241, and Asp245. The active-site Proton donor is the His268.

Belongs to the LpxC family. Requires Zn(2+) as cofactor.

It carries out the reaction a UDP-3-O-[(3R)-3-hydroxyacyl]-N-acetyl-alpha-D-glucosamine + H2O = a UDP-3-O-[(3R)-3-hydroxyacyl]-alpha-D-glucosamine + acetate. Its pathway is glycolipid biosynthesis; lipid IV(A) biosynthesis; lipid IV(A) from (3R)-3-hydroxytetradecanoyl-[acyl-carrier-protein] and UDP-N-acetyl-alpha-D-glucosamine: step 2/6. In terms of biological role, catalyzes the hydrolysis of UDP-3-O-myristoyl-N-acetylglucosamine to form UDP-3-O-myristoylglucosamine and acetate, the committed step in lipid A biosynthesis. The sequence is that of UDP-3-O-acyl-N-acetylglucosamine deacetylase from Bordetella bronchiseptica (strain ATCC BAA-588 / NCTC 13252 / RB50) (Alcaligenes bronchisepticus).